The chain runs to 121 residues: Ribosome-binding factor A (121 aa).

Belongs to the RbfA family. As to quaternary structure, monomer. Binds 30S ribosomal subunits, but not 50S ribosomal subunits or 70S ribosomes.

It localises to the cytoplasm. Functionally, one of several proteins that assist in the late maturation steps of the functional core of the 30S ribosomal subunit. Associates with free 30S ribosomal subunits (but not with 30S subunits that are part of 70S ribosomes or polysomes). Required for efficient processing of 16S rRNA. May interact with the 5'-terminal helix region of 16S rRNA. This chain is Ribosome-binding factor A, found in Brevibacillus brevis (strain 47 / JCM 6285 / NBRC 100599).